A 444-amino-acid polypeptide reads, in one-letter code: tRNA-2-methylthio-N(6)-dimethylallyladenosine synthase (444 aa).

The region spanning 6–124 is the MTTase N-terminal domain; sequence KTFKIITYGC…LPQLIEEIKA (119 aa). [4Fe-4S] cluster-binding residues include cysteine 15, cysteine 51, cysteine 85, cysteine 161, cysteine 165, and cysteine 168. The Radical SAM core domain maps to 147-377; it reads RARGAQAFVT…MELQNSISLA (231 aa). In terms of domain architecture, TRAM spans 380–443; the sequence is EALVGQEVEV…TWLLKGEMVD (64 aa).

It belongs to the methylthiotransferase family. MiaB subfamily. Monomer. It depends on [4Fe-4S] cluster as a cofactor.

The protein localises to the cytoplasm. The catalysed reaction is N(6)-dimethylallyladenosine(37) in tRNA + (sulfur carrier)-SH + AH2 + 2 S-adenosyl-L-methionine = 2-methylsulfanyl-N(6)-dimethylallyladenosine(37) in tRNA + (sulfur carrier)-H + 5'-deoxyadenosine + L-methionine + A + S-adenosyl-L-homocysteine + 2 H(+). Its function is as follows. Catalyzes the methylthiolation of N6-(dimethylallyl)adenosine (i(6)A), leading to the formation of 2-methylthio-N6-(dimethylallyl)adenosine (ms(2)i(6)A) at position 37 in tRNAs that read codons beginning with uridine. The protein is tRNA-2-methylthio-N(6)-dimethylallyladenosine synthase of Moorella thermoacetica (strain ATCC 39073 / JCM 9320).